A 235-amino-acid polypeptide reads, in one-letter code: MTTVLPAFWAVIPAAGIGARMAADRPKQYLQLGGQTILEHSLDCFLDHSALKGVVVSIAEDDPYWPGLRCASDLRIQRAPGGRERADSVLNALLLLHAQGASDDDWVLVHDAARPNLARSDLDKLLSELADDPVGGLLAVPARDTLKRAGADGRVAATVDRSTVWQAYTPQMFRLGMLHRALAECLVSDVAVTDESSAIEWAGHAPRLVEGRSDNIKVTRPEDLEWLRQRWSGRR.

Belongs to the IspD/TarI cytidylyltransferase family. IspD subfamily.

It carries out the reaction 2-C-methyl-D-erythritol 4-phosphate + CTP + H(+) = 4-CDP-2-C-methyl-D-erythritol + diphosphate. It functions in the pathway isoprenoid biosynthesis; isopentenyl diphosphate biosynthesis via DXP pathway; isopentenyl diphosphate from 1-deoxy-D-xylulose 5-phosphate: step 2/6. Its function is as follows. Catalyzes the formation of 4-diphosphocytidyl-2-C-methyl-D-erythritol from CTP and 2-C-methyl-D-erythritol 4-phosphate (MEP). In Pseudomonas entomophila (strain L48), this protein is 2-C-methyl-D-erythritol 4-phosphate cytidylyltransferase.